Reading from the N-terminus, the 119-residue chain is Large ribosomal subunit protein bL20 (119 aa).

The protein belongs to the bacterial ribosomal protein bL20 family.

Functionally, binds directly to 23S ribosomal RNA and is necessary for the in vitro assembly process of the 50S ribosomal subunit. It is not involved in the protein synthesizing functions of that subunit. The protein is Large ribosomal subunit protein bL20 of Acinetobacter baylyi (strain ATCC 33305 / BD413 / ADP1).